A 382-amino-acid polypeptide reads, in one-letter code: UDP-N-acetylglucosamine--N-acetylmuramyl-(pentapeptide) pyrophosphoryl-undecaprenol N-acetylglucosamine transferase (382 aa).

UDP-N-acetyl-alpha-D-glucosamine-binding positions include 11–13 (TGG), N117, R160, S209, and Q311.

Belongs to the glycosyltransferase 28 family. MurG subfamily.

Its subcellular location is the cell inner membrane. The enzyme catalyses di-trans,octa-cis-undecaprenyl diphospho-N-acetyl-alpha-D-muramoyl-L-alanyl-D-glutamyl-meso-2,6-diaminopimeloyl-D-alanyl-D-alanine + UDP-N-acetyl-alpha-D-glucosamine = di-trans,octa-cis-undecaprenyl diphospho-[N-acetyl-alpha-D-glucosaminyl-(1-&gt;4)]-N-acetyl-alpha-D-muramoyl-L-alanyl-D-glutamyl-meso-2,6-diaminopimeloyl-D-alanyl-D-alanine + UDP + H(+). Its pathway is cell wall biogenesis; peptidoglycan biosynthesis. In terms of biological role, cell wall formation. Catalyzes the transfer of a GlcNAc subunit on undecaprenyl-pyrophosphoryl-MurNAc-pentapeptide (lipid intermediate I) to form undecaprenyl-pyrophosphoryl-MurNAc-(pentapeptide)GlcNAc (lipid intermediate II). The chain is UDP-N-acetylglucosamine--N-acetylmuramyl-(pentapeptide) pyrophosphoryl-undecaprenol N-acetylglucosamine transferase from Rickettsia akari (strain Hartford).